The sequence spans 285 residues: Protease HtpX homolog (285 aa).

The next 2 helical transmembrane spans lie at 7–27 and 30–50; these read TAMLMAAITALFIVIGGMIGG and GMTIALLFALGMNFFSYWFSD. Position 131 (H131) interacts with Zn(2+). Residue E132 is part of the active site. H135 serves as a coordination point for Zn(2+). The next 2 helical transmembrane spans lie at 146–166 and 177–197; these read ITATMAGAISAIANFAMFFGG and IAGIAVALLAPIAGALIQMAI. Residue E202 coordinates Zn(2+).

It belongs to the peptidase M48B family. Zn(2+) serves as cofactor.

The protein localises to the cell inner membrane. The chain is Protease HtpX homolog from Burkholderia multivorans (strain ATCC 17616 / 249).